Consider the following 532-residue polypeptide: Bifunctional purine biosynthesis protein PurH (532 aa).

An MGS-like domain is found at 1–147 (MADRPIRQAL…KNHKDVAIVV (147 aa)).

The protein belongs to the PurH family.

The enzyme catalyses (6R)-10-formyltetrahydrofolate + 5-amino-1-(5-phospho-beta-D-ribosyl)imidazole-4-carboxamide = 5-formamido-1-(5-phospho-D-ribosyl)imidazole-4-carboxamide + (6S)-5,6,7,8-tetrahydrofolate. The catalysed reaction is IMP + H2O = 5-formamido-1-(5-phospho-D-ribosyl)imidazole-4-carboxamide. The protein operates within purine metabolism; IMP biosynthesis via de novo pathway; 5-formamido-1-(5-phospho-D-ribosyl)imidazole-4-carboxamide from 5-amino-1-(5-phospho-D-ribosyl)imidazole-4-carboxamide (10-formyl THF route): step 1/1. Its pathway is purine metabolism; IMP biosynthesis via de novo pathway; IMP from 5-formamido-1-(5-phospho-D-ribosyl)imidazole-4-carboxamide: step 1/1. In Haemophilus influenzae (strain ATCC 51907 / DSM 11121 / KW20 / Rd), this protein is Bifunctional purine biosynthesis protein PurH.